A 129-amino-acid chain; its full sequence is Large ribosomal subunit protein bL12 (129 aa).

It belongs to the bacterial ribosomal protein bL12 family. Homodimer. Part of the ribosomal stalk of the 50S ribosomal subunit. Forms a multimeric L10(L12)X complex, where L10 forms an elongated spine to which 2 to 4 L12 dimers bind in a sequential fashion. Binds GTP-bound translation factors.

In terms of biological role, forms part of the ribosomal stalk which helps the ribosome interact with GTP-bound translation factors. Is thus essential for accurate translation. The protein is Large ribosomal subunit protein bL12 of Protochlamydia amoebophila (strain UWE25).